The sequence spans 236 residues: UPF0502 protein Bcep1808_3727 (236 aa).

The protein belongs to the UPF0502 family.

This chain is UPF0502 protein Bcep1808_3727, found in Burkholderia vietnamiensis (strain G4 / LMG 22486) (Burkholderia cepacia (strain R1808)).